The sequence spans 588 residues: Zinc finger protein 599 (588 aa).

The 72-residue stretch at 9-80 folds into the KRAB domain; the sequence is VSFEDVVVTF…KRGLSQSTCA (72 aa). C2H2-type zinc fingers lie at residues 199 to 221, 227 to 249, 255 to 277, 283 to 305, 311 to 333, 339 to 361, 367 to 389, 395 to 417, 423 to 445, 451 to 473, 479 to 501, 507 to 529, 535 to 557, and 563 to 585; these read YTCT…QQIH, YECN…MRLH, YKCI…QRIH, YECK…NMTH, FLCK…MRIH, YECG…NVTH, YECG…KRTH, FECK…MRIH, YECS…NRTH, LECK…MRIH, YVCR…NRIH, FECK…MRTH, and FECN…RKIH.

The protein belongs to the krueppel C2H2-type zinc-finger protein family.

The protein resides in the nucleus. Its function is as follows. May be involved in transcriptional regulation. This is Zinc finger protein 599 (ZNF599) from Homo sapiens (Human).